A 212-amino-acid polypeptide reads, in one-letter code: Large ribosomal subunit protein uL3 (212 aa).

Residues 136–155 (THGNSLSHRSNGSIGQNQTP) show a composition bias toward polar residues. The tract at residues 136–157 (THGNSLSHRSNGSIGQNQTPGR) is disordered. Gln153 is subject to N5-methylglutamine.

It belongs to the universal ribosomal protein uL3 family. As to quaternary structure, part of the 50S ribosomal subunit. Forms a cluster with proteins L14 and L19. Post-translationally, methylated by PrmB.

Functionally, one of the primary rRNA binding proteins, it binds directly near the 3'-end of the 23S rRNA, where it nucleates assembly of the 50S subunit. The sequence is that of Large ribosomal subunit protein uL3 from Shewanella putrefaciens (strain CN-32 / ATCC BAA-453).